The chain runs to 597 residues: NADH-quinone oxidoreductase subunits H/I (597 aa).

Residues 1-405 (MPDLSLFGHD…FPTPPVPADA (405 aa)) are NADH-quinone oxidoreductase subunit H. The next 9 membrane-spanning stretches (helical) occupy residues 12–32 (FWLV…IPLV), 82–102 (PIYL…FAVI), 124–144 (VGVL…VLAG), 170–190 (MALC…SGIV), 195–215 (PTWF…SMVG), 260–280 (ALAT…NLIP), 286–306 (WWGL…FVWL), 318–338 (FMRL…MLVA), and 351–371 (ATGA…GLFL). Residues 406 to 597 (HRVDNPKGGL…APAGAKGGAR (192 aa)) are NADH-quinone oxidoreductase subunit I. 4Fe-4S ferredoxin-type domains are found at residues 455–485 (LNRH…VEGA) and 501–530 (RVYQ…MTND). [4Fe-4S] cluster is bound by residues cysteine 465, cysteine 468, cysteine 471, cysteine 475, cysteine 510, cysteine 513, cysteine 516, and cysteine 520.

The protein in the N-terminal section; belongs to the complex I subunit 1 family. It in the C-terminal section; belongs to the complex I 23 kDa subunit family. NDH-1 is composed of 13 different subunits. Subunits NuoA, H/I, J, K, L, M, N constitute the membrane sector of the complex. The cofactor is [4Fe-4S] cluster.

The protein localises to the cell membrane. It carries out the reaction a quinone + NADH + 5 H(+)(in) = a quinol + NAD(+) + 4 H(+)(out). NDH-1 shuttles electrons from NADH, via FMN and iron-sulfur (Fe-S) centers, to quinones in the respiratory chain. The immediate electron acceptor for the enzyme in this species is believed to be ubiquinone. Couples the redox reaction to proton translocation (for every two electrons transferred, four hydrogen ions are translocated across the cytoplasmic membrane), and thus conserves the redox energy in a proton gradient. This subunit may bind ubiquinone. This is NADH-quinone oxidoreductase subunits H/I (nuoH/I) from Nocardia farcinica (strain IFM 10152).